We begin with the raw amino-acid sequence, 519 residues long: 2-isopropylmalate synthase (519 aa).

One can recognise a Pyruvate carboxyltransferase domain in the interval 12-274 (IRIFDTTLRD…DTSIHTSRIV (263 aa)). Mn(2+) contacts are provided by aspartate 21, histidine 209, histidine 211, and asparagine 245. Residues 396-519 (RLASMTISDV…MQNKQNTALA (124 aa)) are regulatory domain.

The protein belongs to the alpha-IPM synthase/homocitrate synthase family. LeuA type 1 subfamily. As to quaternary structure, homodimer. Requires Mn(2+) as cofactor.

The protein localises to the cytoplasm. The enzyme catalyses 3-methyl-2-oxobutanoate + acetyl-CoA + H2O = (2S)-2-isopropylmalate + CoA + H(+). It participates in amino-acid biosynthesis; L-leucine biosynthesis; L-leucine from 3-methyl-2-oxobutanoate: step 1/4. Catalyzes the condensation of the acetyl group of acetyl-CoA with 3-methyl-2-oxobutanoate (2-ketoisovalerate) to form 3-carboxy-3-hydroxy-4-methylpentanoate (2-isopropylmalate). The protein is 2-isopropylmalate synthase of Xylella fastidiosa (strain M23).